A 329-amino-acid polypeptide reads, in one-letter code: Beta-ketoacyl-[acyl-carrier-protein] synthase III (329 aa).

Residues Cys114 and His255 contribute to the active site. The ACP-binding stretch occupies residues 256–260; that stretch reads QANQR. Asn285 is an active-site residue.

Belongs to the thiolase-like superfamily. FabH family. Homodimer.

The protein resides in the cytoplasm. The enzyme catalyses malonyl-[ACP] + acetyl-CoA + H(+) = 3-oxobutanoyl-[ACP] + CO2 + CoA. The protein operates within lipid metabolism; fatty acid biosynthesis. In terms of biological role, catalyzes the condensation reaction of fatty acid synthesis by the addition to an acyl acceptor of two carbons from malonyl-ACP. Catalyzes the first condensation reaction which initiates fatty acid synthesis and may therefore play a role in governing the total rate of fatty acid production. Possesses both acetoacetyl-ACP synthase and acetyl transacylase activities. Its substrate specificity determines the biosynthesis of branched-chain and/or straight-chain of fatty acids. In Trichodesmium erythraeum (strain IMS101), this protein is Beta-ketoacyl-[acyl-carrier-protein] synthase III.